Consider the following 393-residue polypeptide: MKILVINAGSSSIKFALFEKENLNQIASGIAERIGIENGIISISFDKKYQFEIDMKDHLEAAKKLLELFEQISLIKNADEIELIGFRVVHGGIELNKASKLDQETISIIEKSAKYAPLHNPGALQAIKAFQLALPKAKLSVNLDTAFHSSIDKINYSYPINYELAQKLGIRKFGFHGISHRFITNKLEKILNKKSVNFVNLHIGNGASLCAVKVSKSIDTSMGFTPLAGIMMGTRSGDIDPSIHEFVCKEENMSIEEFTSILNKQSGISGVSQISSDLRDVEEQYAKGNAQAIFALDLYSQKIADYAAIYLNKIAPQIDAIVFTAGVGENSAFVRKNVISRIKIKNIELDEALNSQKVGEYQLISTKNSEIPVYVIRTNEELMIASDAKKLNS.

Residue asparagine 7 coordinates Mg(2+). Lysine 14 is a binding site for ATP. A substrate-binding site is contributed by arginine 87. The Proton donor/acceptor role is filled by aspartate 144. ATP is bound by residues 202 to 206 (HIGNG), 277 to 279 (DLR), and 326 to 330 (GVGEN). Glutamate 380 is a binding site for Mg(2+).

Belongs to the acetokinase family. Homodimer. Requires Mg(2+) as cofactor. Mn(2+) serves as cofactor.

It is found in the cytoplasm. The catalysed reaction is acetate + ATP = acetyl phosphate + ADP. It participates in metabolic intermediate biosynthesis; acetyl-CoA biosynthesis; acetyl-CoA from acetate: step 1/2. Its function is as follows. Catalyzes the formation of acetyl phosphate from acetate and ATP. Can also catalyze the reverse reaction. In Mycoplasmopsis pulmonis (strain UAB CTIP) (Mycoplasma pulmonis), this protein is Acetate kinase.